The chain runs to 266 residues: Undecaprenyl-diphosphatase (266 aa).

8 helical membrane passes run 1–21, 39–59, 87–107, 117–137, 153–173, 189–209, 216–236, and 246–266; these read MEFF…FIPI, PGSS…FWYF, IFIG…FVPG, LSIA…DIST, YIGI…GATI, FSFL…FFSA, FPFL…LLAI, and HGLK…LFNL.

It belongs to the UppP family.

The protein resides in the cell inner membrane. The enzyme catalyses di-trans,octa-cis-undecaprenyl diphosphate + H2O = di-trans,octa-cis-undecaprenyl phosphate + phosphate + H(+). Functionally, catalyzes the dephosphorylation of undecaprenyl diphosphate (UPP). Confers resistance to bacitracin. This Prochlorococcus marinus subsp. pastoris (strain CCMP1986 / NIES-2087 / MED4) protein is Undecaprenyl-diphosphatase.